The following is a 154-amino-acid chain: Superoxide dismutase [Cu-Zn] (154 aa).

The Cu cation site is built by His47, His49, and His64. An intrachain disulfide couples Cys58 to Cys147. 4 residues coordinate Zn(2+): His64, His72, His81, and Asp84. His121 provides a ligand contact to Cu cation. Arg144 contributes to the substrate binding site.

Belongs to the Cu-Zn superoxide dismutase family. In terms of assembly, homodimer. The cofactor is Cu cation. Zn(2+) serves as cofactor.

The protein localises to the cytoplasm. It carries out the reaction 2 superoxide + 2 H(+) = H2O2 + O2. Functionally, destroys radicals which are normally produced within the cells and which are toxic to biological systems. The chain is Superoxide dismutase [Cu-Zn] (sodC) from Aspergillus fumigatus (strain ATCC MYA-4609 / CBS 101355 / FGSC A1100 / Af293) (Neosartorya fumigata).